The sequence spans 424 residues: Ornithine aminotransferase (424 aa).

An N6-(pyridoxal phosphate)lysine modification is found at K272. K390 is covalently cross-linked (Glycyl lysine isopeptide (Lys-Gly) (interchain with G-Cter in ubiquitin)).

Belongs to the class-III pyridoxal-phosphate-dependent aminotransferase family. Pyridoxal 5'-phosphate is required as a cofactor.

The protein resides in the cytoplasm. It carries out the reaction a 2-oxocarboxylate + L-ornithine = L-glutamate 5-semialdehyde + an L-alpha-amino acid. It participates in amino-acid biosynthesis; L-proline biosynthesis; L-glutamate 5-semialdehyde from L-ornithine: step 1/1. By arginine and urea. Catalyzes the transamination of ornithine into L-glutamate gamma-semialdehyde, the second step of arginine degradation. In Saccharomyces cerevisiae (strain ATCC 204508 / S288c) (Baker's yeast), this protein is Ornithine aminotransferase (CAR2).